The following is a 439-amino-acid chain: Proline--tRNA ligase (439 aa).

It belongs to the class-II aminoacyl-tRNA synthetase family. ProS type 2 subfamily. In terms of assembly, homodimer.

The protein localises to the cytoplasm. The enzyme catalyses tRNA(Pro) + L-proline + ATP = L-prolyl-tRNA(Pro) + AMP + diphosphate. In terms of biological role, catalyzes the attachment of proline to tRNA(Pro) in a two-step reaction: proline is first activated by ATP to form Pro-AMP and then transferred to the acceptor end of tRNA(Pro). This chain is Proline--tRNA ligase, found in Rhodopseudomonas palustris (strain HaA2).